Reading from the N-terminus, the 1110-residue chain is Guanylate cyclase 2D (1110 aa).

An N-terminal signal peptide occupies residues 1–66 (MAGLQQGCHP…ADSLSLPAWA (66 aa)). The Extracellular segment spans residues 67–475 (RETFTLGVLG…PNTLCIRGVQ (409 aa)). Cys-121 and Cys-149 are disulfide-bonded. Asn-304 and Asn-374 each carry an N-linked (GlcNAc...) asparagine glycan. Residues 476–500 (PLGSLLTLTITCVLALVGGFLAYFI) traverse the membrane as a helical segment. Topologically, residues 501-1110 (RLGLQQLRLL…TGFAKLARVG (610 aa)) are cytoplasmic. Positions 529–556 (TPSRRRPHVDSGSESRSVVDGGSPQSVI) are disordered. Positions 541–818 (SESRSVVDGG…PSLDQIYTQF (278 aa)) constitute a Protein kinase domain. The segment at 880–921 (MGTTVEPEYFDQVTIYFSDIVGFTTISALSEPIEVVGFLNDL) is interaction with NCALD. The Guanylate cyclase domain maps to 893-1023 (TIYFSDIVGF…DTVNTASRME (131 aa)).

It belongs to the adenylyl cyclase class-4/guanylyl cyclase family. As to quaternary structure, interacts (via the catalytic domain) with NCALD. Specifically expressed in a subpopulation of olfactory sensory neurons. Expressed in the cilia of the olfactory epithelium.

The protein localises to the cell projection. Its subcellular location is the cilium membrane. The enzyme catalyses GTP = 3',5'-cyclic GMP + diphosphate. Activated by Ca(2+). Activated by NCALD in a Ca(2+)-dependent fashion. Functions as an olfactory receptor activated by a urine odorant, uroguanylin. Activated as well by the volatile semiochemicals carbon disulfide (CS2) and carbon dioxide (CO2). Has guanylate cyclase activity upon binding of the ligand. Activation of GUCY2D neurons leads to the cGMP-dependent activation of the CNGA3 channels, membrane depolarization and an increase in action potential frequency. Signaling pathways activated by GUCY2D may trigger social behaviors such as acquisition of food preference. This is Guanylate cyclase 2D (Gucy2d) from Rattus norvegicus (Rat).